Reading from the N-terminus, the 548-residue chain is MAYIPDGGAPTAGAIPLGSQCCVCKVELSVSGQNLLDRDVTSKSDPFCVLFIEDNGRWMEFDRTETAVNNLNPAFSKKFVLDYHFEEVQKLKFALFDQDKSSAQLDEHDFLGQFSCSLGTIVSSKKITRPLLLMNDKPAGKGVITIAAQELSDNRVITLSLAGRKLDKKDLFGKSDPFLEFYKPGDDGKWMLVHRTEVIKYTLDPVWKPFTVPLVSLCDGDLEKPIQVMCYDYDSNGGHDFIGEFQTSVLQMSEARDGVPLEIECINPKKQRKKKSYKNSGIIILRSCKIHRNYSFLDYILGGCQLMFTVGIDFTASNGNPLDPSSLHYINPMGTNEYLSAIWAVGQIIQDYDSDKMFPALGFGAQLPPDWKVSHEFAINFNPTNPFCSGVDGIAQAYSACLPHIRFYGPTNFSPIVNHVARFAAQATQQQTATQYFILLIITDGVISDMEETRHAVVQASKLPMSIIIVGVGNADFAAMEFLDGDNRRLRSHTGEEAARDIVQFVPFREFRNAAKETLAKAVLAELPQQVVQYFKHKNLPPTNSEPA.

C2 domains are found at residues 6–131 and 138–263; these read DGGA…TRPL and PAGK…PLEI. The Ca(2+) site is built by D39, D45, D97, D99, S102, D109, D170, D176, D232, D234, and D240. The interval 247–304 is linker region; sequence TSVLQMSEARDGVPLEIECINPKKQRKKKSYKNSGIIILRSCKIHRNYSFLDYILGGC. Residues 305–507 form the VWFA domain; that stretch reads QLMFTVGIDF…AARDIVQFVP (203 aa).

This sequence belongs to the copine family. The cofactor is Ca(2+).

The protein localises to the cytoplasm. It localises to the nucleus. Its subcellular location is the cell membrane. In terms of biological role, calcium-dependent phospholipid-binding protein that plays a role in calcium-mediated intracellular processes. Exhibits calcium-dependent cell membrane binding properties. The polypeptide is Copine-2 (Mus musculus (Mouse)).